Reading from the N-terminus, the 450-residue chain is Phosphopentomutase (450 aa).

The Phosphoserine intermediate role is filled by Ser-93. Mg(2+)-binding residues include Ser-93, Asp-231, Asp-233, and Asp-235. At Ser-93 the chain carries Phosphoserine; by autocatalysis.

Belongs to the phosphohexose mutase family. As to quaternary structure, homotetramer. Mg(2+) is required as a cofactor. Post-translationally, activated by phosphorylation.

The catalysed reaction is alpha-D-ribose 1-phosphate = D-ribose 5-phosphate. The enzyme catalyses 2-deoxy-alpha-D-ribose 1-phosphate = 2-deoxy-D-ribose 5-phosphate. Its function is as follows. Catalyzes the conversion of deoxyribose 1-phosphate to deoxyribose 5-phosphate. Also shows weak activity with glucose 1-phosphate and mannose 1-phosphate. Could be involved in pentose biosynthesis. The polypeptide is Phosphopentomutase (Thermococcus kodakarensis (strain ATCC BAA-918 / JCM 12380 / KOD1) (Pyrococcus kodakaraensis (strain KOD1))).